The sequence spans 290 residues: 7-methylguanosine phosphate-specific 5'-nucleotidase A (290 aa).

The active-site Nucleophile is aspartate 39. 2 residues coordinate Mg(2+): aspartate 39 and aspartate 41. The active-site Proton donor is the aspartate 41. A CMP-binding site is contributed by glutamate 86. Residue glutamate 86 coordinates N(7)-methyl-GMP. Substrate contacts are provided by residues 154-155 (SA) and lysine 203. Aspartate 228 is a Mg(2+) binding site.

The protein belongs to the pyrimidine 5'-nucleotidase family. Monomer.

The protein localises to the cytoplasm. It carries out the reaction N(7)-methyl-GMP + H2O = N(7)-methylguanosine + phosphate. It catalyses the reaction CMP + H2O = cytidine + phosphate. The enzyme catalyses a ribonucleoside 5'-phosphate + H2O = a ribonucleoside + phosphate. In terms of biological role, specifically hydrolyzes 7-methylguanosine monophosphate (m(7)GMP) to 7-methylguanosine and inorganic phosphate. The specific activity for m(7)GMP may protect cells against undesired salvage of m(7)GMP and its incorporation into nucleic acids. Also has weak activity for CMP. UMP and purine nucleotides are poor substrates. The protein is 7-methylguanosine phosphate-specific 5'-nucleotidase A (Nt5c3b-a) of Xenopus laevis (African clawed frog).